Here is a 240-residue protein sequence, read N- to C-terminus: MRTEAEAAGPPLEPGDFVQLPVPVIQQLYHWDCGLACSRMVLRYLGQLDDSEFERALQKLQLTRSIWTIDLAYLMHHFGVRHRFCTQTLGVDKGYKNQSFYRKHFDTEETRVNQLFAQAKACKVLVEKCTVSVKDIQAHLAQGHVAIVLVNSGVLHCDLCSSPVKYCCFTPSGHHCFCRTPDYQGHFIVLRGYNRATGCIFYNNPAYADPGMCSTSISNFEEARTSYGTDEDILFVYLDS.

This is Protein GUCD1 (GUCD1) from Homo sapiens (Human).